The primary structure comprises 308 residues: Olfactory receptor 5H8 (308 aa).

Topologically, residues 1–28 are extracellular; that stretch reads MDDENATLLTEFVLTGLTYQSEWKIPLF. Residues 29–49 traverse the membrane as a helical segment; the sequence is LAFLVIYLITIMANLGLIAVI. At 50–56 the chain is on the cytoplasmic side; it reads WKDSHLH. The helical transmembrane segment at 57 to 77 threads the bilayer; the sequence is IPMYLFLGSLAFVDAWLSSSV. The Extracellular segment spans residues 78–98; the sequence is TPKMLISFLAKSMIISVSECK. The cysteines at positions 97 and 179 are disulfide-linked. Residues 99-119 traverse the membrane as a helical segment; sequence IQFFSFGISGTTECFLLATMA. At 120-133 the chain is on the cytoplasmic side; the sequence is YDRYVAICKPLLYP. The helical transmembrane segment at 134–154 threads the bilayer; that stretch reads VIMTNGLCIWLLVLSFIGGFL. Over 155–195 the chain is Extracellular; it reads HALIHEGILFRLTFCNSNIIHHFYCDIIPLLKISCTDPSIN. A helical transmembrane segment spans residues 196-216; it reads FLMLFILSGSIQVFTILTVLV. Residues 217–238 lie on the Cytoplasmic side of the membrane; that stretch reads SYTFVLFTILKKKAKDIRKAFS. The helical transmembrane segment at 239–259 threads the bilayer; that stretch reads TCGAHLLSVSLYYGPLLFMYV. The Extracellular segment spans residues 260–270; sequence HPASPQADDQD. The chain crosses the membrane as a helical span at residues 271–291; it reads MVESLFYTVIIPFLNPIIYSL. The Cytoplasmic segment spans residues 292 to 308; the sequence is RNKQVIDSLTKTLKGNV.

It belongs to the G-protein coupled receptor 1 family.

The protein localises to the cell membrane. Odorant receptor. This Homo sapiens (Human) protein is Olfactory receptor 5H8.